The chain runs to 162 residues: Cytochrome c-type biogenesis protein CcmE (162 aa).

The Cytoplasmic segment spans residues 1-8 (MNPRRKKR). The chain crosses the membrane as a helical; Signal-anchor for type II membrane protein span at residues 9–29 (LTLAVALIGGVAAITSLLLYA). At 30 to 162 (LNSNLNLFYT…YSQQKAPDTK (133 aa)) the chain is on the periplasmic side. Residues histidine 131 and tyrosine 135 each coordinate heme. The segment at 142–162 (EAMGQKHEKLDYSQQKAPDTK) is disordered. Over residues 153–162 (YSQQKAPDTK) the composition is skewed to polar residues.

Belongs to the CcmE/CycJ family.

It is found in the cell inner membrane. In terms of biological role, heme chaperone required for the biogenesis of c-type cytochromes. Transiently binds heme delivered by CcmC and transfers the heme to apo-cytochromes in a process facilitated by CcmF and CcmH. The polypeptide is Cytochrome c-type biogenesis protein CcmE (Shewanella baltica (strain OS223)).